Here is a 221-residue protein sequence, read N- to C-terminus: 7-cyano-7-deazaguanine synthase (221 aa).

8–18 lines the ATP pocket; that stretch reads LSGGMDSAAVI. Cysteine 186, cysteine 196, cysteine 199, and cysteine 202 together coordinate Zn(2+).

Belongs to the QueC family. It depends on Zn(2+) as a cofactor.

The catalysed reaction is 7-carboxy-7-deazaguanine + NH4(+) + ATP = 7-cyano-7-deazaguanine + ADP + phosphate + H2O + H(+). It functions in the pathway purine metabolism; 7-cyano-7-deazaguanine biosynthesis. In terms of biological role, catalyzes the ATP-dependent conversion of 7-carboxy-7-deazaguanine (CDG) to 7-cyano-7-deazaguanine (preQ(0)). The sequence is that of 7-cyano-7-deazaguanine synthase from Stenotrophomonas maltophilia (strain R551-3).